Here is a 274-residue protein sequence, read N- to C-terminus: MTEFTTLLQQGNAWFFIPSAILLGALHGLEPGHSKTMMAAFIIAIKGTIKQAVMLGLAATISHTAVVWLIAFGGMVISKRFTAQSAEPWLQLISAVIIISTAFWMFWRTWRGERNWLENMHGHDYEHHHHDHEHHHDHGHHHHHEHGEYQDAHARAHANDIKRRFDGREVTNWQILLFGLTGGLIPCPAAITVLLICIQLKALTLGATLVVSFSIGLALTLVTVGVGAAISVQQVAKRWSGFNTLAKRAPYFSSLLIGLVGVYMGVHGFMGIMR.

Over 1–12 (MTEFTTLLQQGN) the chain is Periplasmic. Residues 13–33 (AWFFIPSAILLGALHGLEPGH) form a helical membrane-spanning segment. The Cytoplasmic portion of the chain corresponds to 34-56 (SKTMMAAFIIAIKGTIKQAVMLG). Residues 57-77 (LAATISHTAVVWLIAFGGMVI) traverse the membrane as a helical segment. The Periplasmic segment spans residues 78-86 (SKRFTAQSA). A helical membrane pass occupies residues 87–107 (EPWLQLISAVIIISTAFWMFW). Residues 108-175 (RTWRGERNWL…DGREVTNWQI (68 aa)) are Cytoplasmic-facing. Residues 127–153 (HHHHDHEHHHDHGHHHHHEHGEYQDAH) form a disordered region. Positions 129 to 144 (HHDHEHHHDHGHHHHH) are enriched in basic residues. A helical transmembrane segment spans residues 176-196 (LLFGLTGGLIPCPAAITVLLI). Over 197–209 (CIQLKALTLGATL) the chain is Periplasmic. Residues 210-230 (VVSFSIGLALTLVTVGVGAAI) form a helical membrane-spanning segment. Residues 231 to 251 (SVQQVAKRWSGFNTLAKRAPY) are Cytoplasmic-facing. The chain crosses the membrane as a helical span at residues 252 to 272 (FSSLLIGLVGVYMGVHGFMGI). The Periplasmic segment spans residues 273–274 (MR).

It belongs to the NiCoT transporter (TC 2.A.52) family. RcnA subfamily.

The protein resides in the cell inner membrane. Efflux system for nickel and cobalt. The sequence is that of Nickel/cobalt efflux system RcnA (rcnA) from Escherichia coli (strain K12).